The sequence spans 342 residues: Succinylglutamate desuccinylase (342 aa).

His64, Glu67, and His159 together coordinate Zn(2+). Glu222 is a catalytic residue.

Belongs to the AspA/AstE family. Succinylglutamate desuccinylase subfamily. Zn(2+) serves as cofactor.

It carries out the reaction N-succinyl-L-glutamate + H2O = L-glutamate + succinate. It participates in amino-acid degradation; L-arginine degradation via AST pathway; L-glutamate and succinate from L-arginine: step 5/5. Functionally, transforms N(2)-succinylglutamate into succinate and glutamate. The protein is Succinylglutamate desuccinylase of Burkholderia orbicola (strain AU 1054).